Consider the following 145-residue polypeptide: Ribosomal protein uL24-like (145 aa).

Disordered regions lie at residues M1–A21 and K122–E145. Glycyl lysine isopeptide (Lys-Gly) (interchain with G-Cter in SUMO2) cross-links involve residues K136 and K142.

This sequence belongs to the universal ribosomal protein uL24 family.

The protein is Ribosomal protein uL24-like (RPL26L1) of Homo sapiens (Human).